The sequence spans 51 residues: MVLNEIHIYQLYLLSQLFNKYRYLCFTVFYSFSSSSTHRYPTLPPHHLLST.

This is an uncharacterized protein from Thermoproteus tenax virus 1 (strain KRA1) (TTV1).